Consider the following 69-residue polypeptide: Amphipathic peptide OcyC2 (69 aa).

Residues 1–23 (MKTQFAILMIAVVLMQMLVQTEG) form the signal peptide. Isoleucine amide is present on Ile37. Residues 41 to 69 (GLKKLDQLDDTFDSDLSDADVKLLREMFK) constitute a propeptide that is removed on maturation.

Belongs to the non-disulfide-bridged peptide (NDBP) superfamily. Short antimicrobial peptide (group 4) family. As to expression, expressed by the venom gland.

The protein localises to the secreted. It localises to the target cell membrane. Amphipathic peptide with antimicrobial activity. Shows antifungal activity with MIC values ranging from 25 to 200 uM. Does not show antifungal activity against Candida glabrata (ATCC90030) and Candida parapsilosis (ATCC22019) (MIC&gt;400 uM). This is Amphipathic peptide OcyC2 from Opisthacanthus cayaporum (South American scorpion).